A 301-amino-acid polypeptide reads, in one-letter code: NAD kinase (301 aa).

The active-site Proton acceptor is the aspartate 73. NAD(+) contacts are provided by residues 73-74, 151-152, arginine 179, aspartate 181, 192-197, alanine 216, and glutamine 250; these read DG, ND, and TAYALS.

It belongs to the NAD kinase family. It depends on a divalent metal cation as a cofactor.

Its subcellular location is the cytoplasm. It carries out the reaction NAD(+) + ATP = ADP + NADP(+) + H(+). Functionally, involved in the regulation of the intracellular balance of NAD and NADP, and is a key enzyme in the biosynthesis of NADP. Catalyzes specifically the phosphorylation on 2'-hydroxyl of the adenosine moiety of NAD to yield NADP. The chain is NAD kinase from Methylibium petroleiphilum (strain ATCC BAA-1232 / LMG 22953 / PM1).